The following is a 254-amino-acid chain: Phosphorelay intermediate protein rdeA (254 aa).

The 98-residue stretch at 26–123 folds into the HPt domain; it reads EKEFTFELLD…KILSDFKKNW (98 aa). His65 is subject to Phosphohistidine. The disordered stretch occupies residues 124-254; the sequence is DKNHGEGGSD…SNSPTKIQTK (131 aa). The span at 131–143 shows a compositional bias: acidic residues; that stretch reads GSDDGGDDNESEP. Positions 146–160 are enriched in low complexity; sequence NNNNDGSSVNNNDSS. The span at 166–186 shows a compositional bias: basic and acidic residues; the sequence is KDIENKNTDENTGKNLNERSK. The span at 220-238 shows a compositional bias: low complexity; that stretch reads NNTNSSSNNNSKNENGLNS. Positions 239-254 are enriched in polar residues; that stretch reads KQPQTSSNSPTKIQTK.

The phosphorelay mechanism involves the sequential transfer of a phosphate group from 'Asp-212' of pde2 to His-65 of rdeA. In vitro, dephosphorylated by dokA.

Its subcellular location is the cytoplasm. Its function is as follows. Phosphorelay protein that supplies phosphate to regA or accepts phosphate from regA; depending on the relative concentration of the phosphodonor proteins. In vitro, acts as a substrate for cheA (bacterial kinase). Plays a role in the development. ypd1 (yeast) can complement rdeA defect. The chain is Phosphorelay intermediate protein rdeA (rdeA) from Dictyostelium discoideum (Social amoeba).